A 118-amino-acid chain; its full sequence is UPF0342 protein BpOF4_11360 (118 aa).

The protein belongs to the UPF0342 family.

The protein is UPF0342 protein BpOF4_11360 of Alkalihalophilus pseudofirmus (strain ATCC BAA-2126 / JCM 17055 / OF4) (Bacillus pseudofirmus).